A 699-amino-acid polypeptide reads, in one-letter code: PTS system glucose-specific EIICBA component (699 aa).

In terms of domain architecture, PTS EIIC type-1 spans 3–424; the sequence is KALFGVLQKI…FNLKTPGRED (422 aa). 11 consecutive transmembrane segments (helical) span residues 16 to 36, 66 to 86, 89 to 109, 139 to 159, 180 to 200, 233 to 253, 283 to 303, 313 to 333, 338 to 358, 365 to 385, and 388 to 408; these read LMLP…GNAM, IVFD…LANG, VAGI…SAVL, IPTL…AALL, FVPI…LVIW, LIPF…FFSY, FMTG…LAIY, LVAG…ITEP, FLFV…LSFM, VKIG…GILP, and TAWW…YFGF. One can recognise a PTS EIIB type-1 domain in the interval 439–520; it reads GDLPYEILQA…QDIIAGRKPR (82 aa). Catalysis depends on Cys461, which acts as the Phosphocysteine intermediate; for EIIB activity. In terms of domain architecture, PTS EIIA type-1 spans 568 to 672; that stretch reads DQVFSGKMMG…SLMTPIVFTN (105 aa). The active-site Tele-phosphohistidine intermediate; for EIIA activity is the His620.

It localises to the cell membrane. It carries out the reaction N(pros)-phospho-L-histidyl-[protein] + D-glucose(out) = D-glucose 6-phosphate(in) + L-histidyl-[protein]. The catalysed reaction is D-glucosamine(out) + N(pros)-phospho-L-histidyl-[protein] = D-glucosamine 6-phosphate(in) + L-histidyl-[protein]. Its function is as follows. The phosphoenolpyruvate-dependent sugar phosphotransferase system (sugar PTS), a major carbohydrate active transport system, catalyzes the phosphorylation of incoming sugar substrates concomitantly with their translocation across the cell membrane. This system is involved in glucose transport. The system can also transport glucosamine. In addition, plays an important role in the phosphorylation of EIIA-deficient PTS transporters. The EIIA domain can transfer a phosphoryl group to EIIA-deficient PTS transporters, enabling growth with maltose, N-acetylglucosamine, sucrose or trehalose as the sole carbon source. This is PTS system glucose-specific EIICBA component (ptsG) from Bacillus subtilis (strain 168).